Consider the following 227-residue polypeptide: Uracil-DNA glycosylase (227 aa).

The Proton acceptor role is filled by Asp-65.

Belongs to the uracil-DNA glycosylase (UDG) superfamily. UNG family.

Its subcellular location is the cytoplasm. The enzyme catalyses Hydrolyzes single-stranded DNA or mismatched double-stranded DNA and polynucleotides, releasing free uracil.. Its function is as follows. Excises uracil residues from the DNA which can arise as a result of misincorporation of dUMP residues by DNA polymerase or due to deamination of cytosine. In Bacillus velezensis (strain DSM 23117 / BGSC 10A6 / LMG 26770 / FZB42) (Bacillus amyloliquefaciens subsp. plantarum), this protein is Uracil-DNA glycosylase.